Reading from the N-terminus, the 150-residue chain is UPF0178 protein Sbal223_2514 (150 aa).

It belongs to the UPF0178 family.

This chain is UPF0178 protein Sbal223_2514, found in Shewanella baltica (strain OS223).